The chain runs to 643 residues: Pseudouridylate synthase PUS7L (643 aa).

Asp-284 serves as the catalytic Nucleophile. Positions 370-597 (GFVNYYGPQR…PGCYRPLLAK (228 aa)) constitute a TRUD domain.

Belongs to the pseudouridine synthase TruD family.

It carries out the reaction a uridine in mRNA = a pseudouridine in mRNA. In terms of biological role, pseudouridine synthase that catalyzes pseudouridylation of mRNAs. The chain is Pseudouridylate synthase PUS7L (pus7l) from Danio rerio (Zebrafish).